The following is a 422-amino-acid chain: Dihydroorotase (422 aa).

Histidine 59 and histidine 61 together coordinate Zn(2+). Substrate-binding positions include 61 to 63 (HFR) and asparagine 93. Residues aspartate 150, histidine 177, and histidine 230 each contribute to the Zn(2+) site. Asparagine 276 is a substrate binding site. Zn(2+) is bound at residue aspartate 303. Aspartate 303 is a catalytic residue. Residue histidine 307 participates in substrate binding.

It belongs to the metallo-dependent hydrolases superfamily. DHOase family. Class I DHOase subfamily. It depends on Zn(2+) as a cofactor.

It catalyses the reaction (S)-dihydroorotate + H2O = N-carbamoyl-L-aspartate + H(+). It functions in the pathway pyrimidine metabolism; UMP biosynthesis via de novo pathway; (S)-dihydroorotate from bicarbonate: step 3/3. Catalyzes the reversible cyclization of carbamoyl aspartate to dihydroorotate. The sequence is that of Dihydroorotase from Streptococcus pyogenes serotype M3 (strain ATCC BAA-595 / MGAS315).